Reading from the N-terminus, the 624-residue chain is Polycomb group protein EMF2A (624 aa).

A C2H2-type zinc finger spans residues 338–359; the sequence is CPFCLVRCGNFKGLECHMTSSH. Positions 420-445 are disordered; the sequence is DAHIMESGSPEETQAESEDDVQEENE. The segment covering 432–445 has biased composition (acidic residues); that stretch reads TQAESEDDVQEENE. Residues 474-609 form a VEFS-box region; that stretch reads LSANRADPRN…SARTMDTCNR (136 aa).

The protein belongs to the VEFS (VRN2-EMF2-FIS2-SU(Z)12) family. As to quaternary structure, component of the polycomb repressive complex 2 (PRC2), which methylates 'Lys-27' residues of histone H3 (H3K27me3), leading to transcriptional repression of the affected target gene. In terms of tissue distribution, widely expressed. Highly expressed in shoot apical meristem and inflorescence meristem. Expressed in roots, leaves and immature seeds.

In terms of biological role, polycomb group (PcG) protein. PcG proteins act by forming multiprotein complexes, which are required to maintain the transcriptionally repressive state of homeotic genes throughout development. PcG proteins are not required to initiate repression, but to maintain it during later stages of development. They act via the methylation of histones, rendering chromatin heritably changed in its expressibility. The chain is Polycomb group protein EMF2A from Oryza sativa subsp. japonica (Rice).